A 194-amino-acid polypeptide reads, in one-letter code: MAIGSKIIKPGGSDPDDFEKSIAQALVELEANSDLKPYLRDLHITRAREIEFGSKKAVIIYVPIPQQKVFQKIQIILVRELEKKFSGKHVVVIAERKILPKPTRKARNPLKQKRPRSRTLTAVYDAILEDLVFPAEIVGKRIRVKLDGSQLVKVHLDKNQQTTIEHKVDTFTSVYKKLTGRDVTFEFPDNYLNV.

It belongs to the eukaryotic ribosomal protein eS7 family.

The chain is Small ribosomal subunit protein eS7 (RpS7) from Drosophila melanogaster (Fruit fly).